Here is a 192-residue protein sequence, read N- to C-terminus: ATP-dependent Clp protease proteolytic subunit 1 (192 aa).

The active-site Nucleophile is the serine 92. Histidine 117 is a catalytic residue.

Belongs to the peptidase S14 family. As to quaternary structure, fourteen ClpP subunits assemble into 2 heptameric rings which stack back to back to give a disk-like structure with a central cavity, resembling the structure of eukaryotic proteasomes.

The protein resides in the cytoplasm. The enzyme catalyses Hydrolysis of proteins to small peptides in the presence of ATP and magnesium. alpha-casein is the usual test substrate. In the absence of ATP, only oligopeptides shorter than five residues are hydrolyzed (such as succinyl-Leu-Tyr-|-NHMec, and Leu-Tyr-Leu-|-Tyr-Trp, in which cleavage of the -Tyr-|-Leu- and -Tyr-|-Trp bonds also occurs).. Functionally, cleaves peptides in various proteins in a process that requires ATP hydrolysis. Has a chymotrypsin-like activity. Plays a major role in the degradation of misfolded proteins. This Chlamydia abortus (strain DSM 27085 / S26/3) (Chlamydophila abortus) protein is ATP-dependent Clp protease proteolytic subunit 1.